The chain runs to 347 residues: Haptoglobin (347 aa).

The signal sequence occupies residues 1–18; that stretch reads MSALGAVIALLLWGQLFA. Residues 31-88 enclose the Sushi domain; that stretch reads DGCPKPPQIAHGYVEHSVRYQCKNYYRLRTEGDGVYTLNSEKQWINKAVGDKLPECEA. 4 cysteine pairs are disulfide-bonded: Cys52/Cys86, Cys90/Cys207, Cys250/Cys281, and Cys292/Cys322. One can recognise a Peptidase S1 domain in the interval 103-347; sequence ILGGHLDAKG…DWVQKTIAKN (245 aa). N-linked (GlcNAc...) asparagine glycans are attached at residues Asn125, Asn148, Asn152, and Asn182. An interaction with CD163 region spans residues 259-264; the sequence is VPEKKT.

The protein belongs to the peptidase S1 family. As to quaternary structure, tetramer of two alpha and two beta chains; disulfide-linked. The hemoglobin/haptoglobin complex is composed of a haptoglobin dimer bound to two hemoglobin alpha-beta dimers. Interacts with CD163. Interacts with ERGIC3.

It localises to the secreted. Its function is as follows. As a result of hemolysis, hemoglobin is found to accumulate in the kidney and is secreted in the urine. Haptoglobin captures, and combines with free plasma hemoglobin to allow hepatic recycling of heme iron and to prevent kidney damage. Haptoglobin also acts as an antioxidant, has antibacterial activity and plays a role in modulating many aspects of the acute phase response. Hemoglobin/haptoglobin complexes are rapidly cleared by the macrophage CD163 scavenger receptor expressed on the surface of liver Kupfer cells through an endocytic lysosomal degradation pathway. This is Haptoglobin (HP) from Pongo abelii (Sumatran orangutan).